A 177-amino-acid polypeptide reads, in one-letter code: NADH-quinone oxidoreductase subunit B (177 aa).

Positions 56, 57, 121, and 151 each coordinate [4Fe-4S] cluster.

This sequence belongs to the complex I 20 kDa subunit family. NDH-1 is composed of 14 different subunits. Subunits NuoB, C, D, E, F, and G constitute the peripheral sector of the complex. [4Fe-4S] cluster is required as a cofactor.

The protein resides in the cell inner membrane. It carries out the reaction a quinone + NADH + 5 H(+)(in) = a quinol + NAD(+) + 4 H(+)(out). NDH-1 shuttles electrons from NADH, via FMN and iron-sulfur (Fe-S) centers, to quinones in the respiratory chain. Couples the redox reaction to proton translocation (for every two electrons transferred, four hydrogen ions are translocated across the cytoplasmic membrane), and thus conserves the redox energy in a proton gradient. This Roseobacter denitrificans (strain ATCC 33942 / OCh 114) (Erythrobacter sp. (strain OCh 114)) protein is NADH-quinone oxidoreductase subunit B.